Here is a 409-residue protein sequence, read N- to C-terminus: uncharacterized protein (409 aa).

A run of 10 helical transmembrane segments spans residues 18-38, 47-67, 100-120, 159-179, 180-200, 232-252, 260-280, 302-322, 355-375, and 380-400; these read ALSA…ADVV, GPLL…TGVG, VVTV…ALVI, VGAM…GNAY, APAL…LLWL, FWLY…FGLL, GVLA…ADAL, ILSI…VVIG, GVFA…IGWL, and IGTL…MMFA.

It localises to the cell membrane. This is an uncharacterized protein from Mycobacterium tuberculosis (strain CDC 1551 / Oshkosh).